A 281-amino-acid polypeptide reads, in one-letter code: Phosphatidylglycerol--prolipoprotein diacylglyceryl transferase (281 aa).

Transmembrane regions (helical) follow at residues 23-43 (IGPLAVHWYGLGYVVGILFAW), 71-91 (FVIWAALGVVLGGRIGYVLFY), 107-127 (WDGGMSFHGGILGTTLAMILF), and 133-153 (ILVWSMFDTIAAGVPIGLGVV). Arginine 154 serves as a coordination point for a 1,2-diacyl-sn-glycero-3-phospho-(1'-sn-glycerol). Helical transmembrane passes span 189–209 (LYEAFLEGLVLFFVLFVLVWG), 217–237 (GFVAGAFVTGYGLSRIAVEFF), and 247–267 (LFGGWLTMGMVLSVPMVLLGL).

This sequence belongs to the Lgt family.

The protein localises to the cell inner membrane. It carries out the reaction L-cysteinyl-[prolipoprotein] + a 1,2-diacyl-sn-glycero-3-phospho-(1'-sn-glycerol) = an S-1,2-diacyl-sn-glyceryl-L-cysteinyl-[prolipoprotein] + sn-glycerol 1-phosphate + H(+). It participates in protein modification; lipoprotein biosynthesis (diacylglyceryl transfer). Catalyzes the transfer of the diacylglyceryl group from phosphatidylglycerol to the sulfhydryl group of the N-terminal cysteine of a prolipoprotein, the first step in the formation of mature lipoproteins. The sequence is that of Phosphatidylglycerol--prolipoprotein diacylglyceryl transferase from Brucella canis (strain ATCC 23365 / NCTC 10854 / RM-666).